Reading from the N-terminus, the 563-residue chain is MDYKNLVAERIKENTELEVDLIEKLIEIPPKKEMGDYAFPCFQLAKTFRKAPNLIAEELKEKINKEGFEKVVTVGPYLNFFVDKTILIKDVLEKVLSEKEKYGSSKVGEGKNVVVEYSSPNIAKPFHIGHLFTTAIGNALYKILSFEGYNCIGINHLGDWGTQFGKLISAYRRWVDEEALEKDAIGELLRIYVKFHEEAEKDPELEKEARLNFKNLEDGSKEETELWNRFKDLSLKEFNKVYDMLGIKFDSLAGESFYSDKMDAVVQEIDDKGLLVDSNGAKVVMLDEYNMPPCMIKKSDGATIYATRDLAAAIYRKKTYDFHKCIYVVGTPQALHFKQVFTTLKLMGHDWADDCKHVGFGLVKLANKKLSTRNGDVVFLEDLLNQSVEETLKIINEKNPNLKNKEDVAKKLGIGAVVFTYLKNNRERDIVFDWKEILSFDGETGPYVEYSYARGKSILRKAGELTGEADYSKLSSKEEFELAKLLGGFNDAIMNAIDKLEPAMVTRYIIEVAKAFNKFYNAHGILNAEDNDVKLARVKLVEATCQVIKNALNLLGIDVVEEM.

Residues 120–130 (PNIAKPFHIGH) carry the 'HIGH' region motif.

It belongs to the class-I aminoacyl-tRNA synthetase family. As to quaternary structure, monomer.

It is found in the cytoplasm. The catalysed reaction is tRNA(Arg) + L-arginine + ATP = L-arginyl-tRNA(Arg) + AMP + diphosphate. The chain is Arginine--tRNA ligase from Clostridium botulinum (strain Langeland / NCTC 10281 / Type F).